The chain runs to 591 residues: ESX-1 secretion system protein EccCb1 (591 aa).

2 consecutive FtsK domains span residues 65-259 (LQDV…NETQ) and 359-545 (LTPA…EKQE). Residues 84–91 (GAPQTGKS) and 376–383 (GAAKSGKT) contribute to the ATP site.

As to quaternary structure, part of the ESX-1 / type VII secretion system (T7SS), which is composed of cytosolic and membrane components. The ESX-1 membrane complex is composed of EccB1, EccCa1, EccCb1, EccD1 and EccE1. Interacts with EccCa1, EspK and the C-terminus of EsxB. Residues 1-261 interact with EsxB and an artificial EsxB-EsxA heterodimer.

Its subcellular location is the cytoplasm. Its activity is regulated as follows. EsxB binding to the second FtsK domain of EccCb1 causes multimerization; a subsequent unknown step relieves the allosteric inhibition of linker 2 on FtsK domain 1 (in EccCa1 subunit), activating the ATPase activity. Part of the ESX-1 specialized secretion system, which delivers several virulence factors to host cells during infection, including the key virulence factors EsxA (ESAT-6) and EsxB (CFP-10). EccCb1 may link the cytosolic components of the system with the membrane components. This Mycobacterium tuberculosis (strain ATCC 25618 / H37Rv) protein is ESX-1 secretion system protein EccCb1.